The primary structure comprises 305 residues: Dihydroorotate dehydrogenase B (NAD(+)), catalytic subunit (305 aa).

FMN contacts are provided by residues Ser-21 and 45–46 (KA). Residues Lys-45 and 69-73 (NAIGL) each bind substrate. Residues Asn-99 and Asn-127 each coordinate FMN. Asn-127 is a binding site for substrate. Cys-130 functions as the Nucleophile in the catalytic mechanism. Residues Lys-165 and Ile-190 each coordinate FMN. Position 191-192 (191-192 (NT)) interacts with substrate. FMN is bound by residues Gly-216, 242–243 (GG), and 264–265 (GT).

The protein belongs to the dihydroorotate dehydrogenase family. Type 1 subfamily. Heterotetramer of 2 PyrK and 2 PyrD type B subunits. FMN is required as a cofactor.

The protein localises to the cytoplasm. The enzyme catalyses (S)-dihydroorotate + NAD(+) = orotate + NADH + H(+). The protein operates within pyrimidine metabolism; UMP biosynthesis via de novo pathway; orotate from (S)-dihydroorotate (NAD(+) route): step 1/1. Functionally, catalyzes the conversion of dihydroorotate to orotate with NAD(+) as electron acceptor. The chain is Dihydroorotate dehydrogenase B (NAD(+)), catalytic subunit (pyrD) from Staphylococcus carnosus (strain TM300).